The primary structure comprises 477 residues: Regulator of G-protein signaling 7 (477 aa).

Residues 37–112 (EKNGIPIRTV…DDGTFYRFQT (76 aa)) form the DEP domain. 2 positions are modified to phosphoserine: Ser-229 and Ser-241. The tract at residues 236–257 (DIRSHSPTHTPTPETKPPTEDE) is disordered. Thr-243 is subject to Phosphothreonine. The G protein gamma domain occupies 255–316 (EDELHRQIKY…LSDDTTFWEL (62 aa)). Residues 333–448 (GMDEALKDPV…IRSSAYQELL (116 aa)) enclose the RGS domain. Ser-434 is modified (phosphoserine).

In terms of assembly, interacts with GNB5, forming the RGS7-GNB5 complex. Interacts with GPR158; promotes the GTPase activator activity of the RGS7-GNB5 complex in absence of glycine, in contrast GTPase activator activity of the RGS7-GNB5 complex is inhibited in presence of glycine. Interacts with GPR179. Interacts with PKD1; this prevents rapid proteasomal degradation. Interacts with RGS7BP, leading to regulate the subcellular location of the heterodimer formed with GNB5. Interacts (phosphorylated form) with 14-3-3 protein YWHAQ. Interacts with SNAPIN. Interacts with GNAI1. Interacts with GNAO1, GNAI3 and GNAZ. Post-translationally, palmitoylated. Ubiquitinated, leading to rapid proteasomal degradation. In terms of processing, phosphorylation and subsequent interaction with 14-3-3 proteins inhibits GAP activity. In terms of tissue distribution, brain-specific. Predominantly cerebellar granule cells.

The protein localises to the cytoplasm. It is found in the cytosol. It localises to the cell membrane. The protein resides in the membrane. Its function is as follows. GTPase activator component of the RGS7-GNB5 complex that regulates G protein-coupled receptor signaling cascades. The RGS7-GNB5 complex acts as an inhibitor signal transduction by promoting the GTPase activity of G protein alpha subunits, such as GNAO1, thereby driving them into their inactive GDP-bound form. May play a role in synaptic vesicle exocytosis. Glycine-dependent regulation of the RGS7-GNB5 complex by GPR158 affects mood and cognition via its ability to regulate neuronal excitability in L2/L3 pyramidal neurons of the prefrontal cortex. Modulates the activity of potassium channels that are activated by GNAO1 in response to muscarinic acetylcholine receptor M2/CHRM2 signaling. This chain is Regulator of G-protein signaling 7 (Rgs7), found in Rattus norvegicus (Rat).